Reading from the N-terminus, the 477-residue chain is UDP-N-acetylmuramate--L-alanine ligase (477 aa).

Residue Gly-122–Thr-128 coordinates ATP.

Belongs to the MurCDEF family.

The protein resides in the cytoplasm. The enzyme catalyses UDP-N-acetyl-alpha-D-muramate + L-alanine + ATP = UDP-N-acetyl-alpha-D-muramoyl-L-alanine + ADP + phosphate + H(+). Its pathway is cell wall biogenesis; peptidoglycan biosynthesis. In terms of biological role, cell wall formation. The protein is UDP-N-acetylmuramate--L-alanine ligase of Xanthomonas axonopodis pv. citri (strain 306).